The sequence spans 614 residues: MKGLSSLINRKKDRNDSHLDEIENGVNATEFNSIEMEEQGKKSDFDLSHLEYGPGSLIPNDNNEEVPDLLDEAMQDAKEADESERGMPLMTALKTYPKAAAWSLLVSTTLIQEGYDTAILGAFYALPVFQKKYGSLNSNTGDYEISVSWQIGLCLCYMAGEIVGLQVTGPSVDYMGNRYTLIMALFFLAAFIFILYFCKSLGMIAVGQALCGMPWGCFQCLTVSYASEICPLALRYYLTTYSNLCWTFGQLFAAGIMKNSQNKYANSELGYKLPFALQWIWPLPLAVGIFLAPESPWWLVKKGRIDQARRSLERILSGKGPEKELLVSMELDKIKTTIEKEQKMSDEGTYWDCVKDGINRRRTRIACLCWIGQCSCGASLIGYSTYFYEKAGVSTDTAFTFSIIQYCLGIAATFVSWWASKYCGRFDLYAFGLAFQAIMFFIIGGLGCSDTHGAKMGSGALLMVVAFFYNLGIAPVVFCLVSEMPSSRLRTKTIILARNAYNVIQVVVTVLIMYQLNSEKWNWGAKSGFFWGGFCLATLAWAVVDLPETAGRTFIEINELFRLGVPARKFKSTKVDPFAAAKAAAAEINVKDPKEDLETSVVDEGRSTPSVVNK.

The tract at residues 1 to 48 is disordered; the sequence is MKGLSSLINRKKDRNDSHLDEIENGVNATEFNSIEMEEQGKKSDFDLS. Residues 1–108 are Cytoplasmic-facing; that stretch reads MKGLSSLINR…AAAWSLLVST (108 aa). The span at 38–48 shows a compositional bias: basic and acidic residues; that stretch reads EQGKKSDFDLS. A helical membrane pass occupies residues 109–129; the sequence is TLIQEGYDTAILGAFYALPVF. The Extracellular segment spans residues 130–144; sequence QKKYGSLNSNTGDYE. The helical transmembrane segment at 145 to 165 threads the bilayer; sequence ISVSWQIGLCLCYMAGEIVGL. Over 166 to 180 the chain is Cytoplasmic; it reads QVTGPSVDYMGNRYT. A helical membrane pass occupies residues 181–201; sequence LIMALFFLAAFIFILYFCKSL. Position 202 (G202) is a topological domain, extracellular. A helical membrane pass occupies residues 203–223; it reads MIAVGQALCGMPWGCFQCLTV. Residues 224 to 236 lie on the Cytoplasmic side of the membrane; it reads SYASEICPLALRY. Residues 237 to 257 form a helical membrane-spanning segment; sequence YLTTYSNLCWTFGQLFAAGIM. Over 258–272 the chain is Extracellular; the sequence is KNSQNKYANSELGYK. A helical membrane pass occupies residues 273-293; sequence LPFALQWIWPLPLAVGIFLAP. Residues 294-364 are Cytoplasmic-facing; sequence ESPWWLVKKG…KDGINRRRTR (71 aa). A helical membrane pass occupies residues 365 to 385; that stretch reads IACLCWIGQCSCGASLIGYST. Topologically, residues 386 to 398 are extracellular; it reads YFYEKAGVSTDTA. A helical transmembrane segment spans residues 399–419; it reads FTFSIIQYCLGIAATFVSWWA. The Cytoplasmic segment spans residues 420–427; that stretch reads SKYCGRFD. The helical transmembrane segment at 428-448 threads the bilayer; that stretch reads LYAFGLAFQAIMFFIIGGLGC. Residues 449-460 are Extracellular-facing; it reads SDTHGAKMGSGA. The helical transmembrane segment at 461 to 481 threads the bilayer; it reads LLMVVAFFYNLGIAPVVFCLV. Over 482-493 the chain is Cytoplasmic; the sequence is SEMPSSRLRTKT. The chain crosses the membrane as a helical span at residues 494–514; that stretch reads IILARNAYNVIQVVVTVLIMY. Over 515–526 the chain is Extracellular; that stretch reads QLNSEKWNWGAK. Residues 527 to 547 traverse the membrane as a helical segment; it reads SGFFWGGFCLATLAWAVVDLP. Topologically, residues 548–614 are cytoplasmic; the sequence is ETAGRTFIEI…GRSTPSVVNK (67 aa). The interval 594 to 614 is disordered; it reads KEDLETSVVDEGRSTPSVVNK.

The protein belongs to the major facilitator superfamily. Sugar transporter (TC 2.A.1.1) family.

The protein localises to the membrane. In terms of biological role, transporter for maltose. The chain is Maltose permease MAL61 (MAL61) from Saccharomyces cerevisiae (Baker's yeast).